The chain runs to 434 residues: Glutamine synthetase leaf isozyme, chloroplastic (434 aa).

2 disordered regions span residues 1–33 and 101–126; these read MQVRRDDDGAGGCAGDAVPGGGEGQDGVPARQP and TISKPVEDPSELPKWNYDGSSTGQAP. A chloroplast-targeting transit peptide spans 1–54; that stretch reads MQVRRDDDGAGGCAGDAVPGGGEGQDGVPARQPAGRVWGVSRAARATSGFKVLA. Residues 10–25 are compositionally biased toward gly residues; sequence AGGCAGDAVPGGGEGQ. One can recognise a GS beta-grasp domain in the interval 81–161; it reads IIAEYIWVGG…VICDTYTPQG (81 aa). In terms of domain architecture, GS catalytic spans 168–434; it reads KRHMAAQIFS…LAAKKLALKV (267 aa).

It belongs to the glutamine synthetase family. As to quaternary structure, homooctamer.

It is found in the plastid. The protein localises to the chloroplast. The enzyme catalyses L-glutamate + NH4(+) + ATP = L-glutamine + ADP + phosphate + H(+). The light-modulated chloroplast enzyme, encoded by a nuclear gene and expressed primarily in leaves, is responsible for the reassimilation of the ammonia generated by photorespiration. This chain is Glutamine synthetase leaf isozyme, chloroplastic, found in Hordeum vulgare (Barley).